We begin with the raw amino-acid sequence, 578 residues long: MGIKYLPVSVASTALSFVGLQVWTELSLDRLRADGLIAKNISLGDSEHALELLLGSYFTIALLTNFVLNVYILLVLSLKTLFFGDLYDVETKKLVERLANYIIYKGTFLPLVIPPTIFQGVLWTVWLTVLCTLKMFQALARDRLERLNASPSSTPWTYFRVYSVLFLVLSVDMFWIKLSLMTYNTIGSAVYLLLLFEPCSIAFETLQALLIHGFQLLDMWINHLAVKNSDCQRSKFIDSMTAGSLLEWKGLLNRNLGFFLDMATLVMALGHYLHIWWLHGIAFHLVDAVLFLNIRALLSAILKRIKGYIKLRIALGALHAALPDATSEELRAYDDECAICREPMAKAKRLHCNHLFHLGCLRSWLDQGLNEVYSCPTCRKPLFVGRTENEVNPRTVEVSSDEQLARQLERQNNPVHALATGLFPAEVPDSVENDTSRNLGLDPSWLQTWSSQGSDVAGPSTTSRTVGLGRVQMMMRHLASVGESYAQTALDDAAWSLWPMNPSQASTSSTTVPPGNGGRTGGLHLRTVSNTTNESLTNILAMAETVREVMPHVPDEIIFQDLQRTNSVAVTVNNLLQM.

6 helical membrane passes run 6–26 (LPVSVASTALSFVGLQVWTEL), 58–78 (FTIALLTNFVLNVYILLVLSL), 111–131 (LVIPPTIFQGVLWTVWLTVLC), 161–181 (VYSVLFLVLSVDMFWIKLSLM), 186–206 (IGSAVYLLLLFEPCSIAFETL), and 272–292 (YLHIWWLHGIAFHLVDAVLFL). The RING-type; atypical zinc finger occupies 337 to 379 (CAICREPMAKAKRLHCNHLFHLGCLRSWLDQGLNEVYSCPTCR). Residues 504-513 (QASTSSTTVP) show a composition bias toward polar residues. The disordered stretch occupies residues 504-524 (QASTSSTTVPPGNGGRTGGLH). The region spanning 538–578 (NILAMAETVREVMPHVPDEIIFQDLQRTNSVAVTVNNLLQM) is the CUE domain.

As to quaternary structure, interacts (via C-terminus) with RPM1 (via N-terminus).

The protein resides in the membrane. The enzyme catalyses S-ubiquitinyl-[E2 ubiquitin-conjugating enzyme]-L-cysteine + [acceptor protein]-L-lysine = [E2 ubiquitin-conjugating enzyme]-L-cysteine + N(6)-ubiquitinyl-[acceptor protein]-L-lysine.. The protein operates within protein modification; protein ubiquitination. Functionally, E3 ubiquitin protein ligase that acts as a positive regulator of RPM1- and RPS2-dependent hypersensitive response (HR), in association with RIN3. Probably not required for RPM1 degradation during HR. The polypeptide is E3 ubiquitin protein ligase RIN2 (RIN2) (Arabidopsis thaliana (Mouse-ear cress)).